Reading from the N-terminus, the 230-residue chain is Large ribosomal subunit protein bL25 (230 aa).

Belongs to the bacterial ribosomal protein bL25 family. CTC subfamily. Part of the 50S ribosomal subunit; part of the 5S rRNA/L5/L18/L25 subcomplex. Contacts the 5S rRNA. Binds to the 5S rRNA independently of L5 and L18.

Its function is as follows. This is one of the proteins that binds to the 5S RNA in the ribosome where it forms part of the central protuberance. The polypeptide is Large ribosomal subunit protein bL25 (rplY) (Rhodopseudomonas palustris (strain ATCC BAA-98 / CGA009)).